The chain runs to 197 residues: OV-16 antigen (197 aa).

The N-terminal stretch at 1 to 16 (MHCLQVVIAIVLYSFG) is a signal peptide. N-linked (GlcNAc...) asparagine glycans are attached at residues Asn56, Asn61, Asn119, and Asn124.

It belongs to the phosphatidylethanolamine-binding protein family. As to expression, hypodermis, cuticle and uterus.

This Onchocerca volvulus protein is OV-16 antigen (OV16).